The following is a 272-amino-acid chain: MKMFDNIKNVGKLIRLERIFDKKSEKTVIIPMDHGVSSGPLEGIKDMRIATNAVADGGANAVLGHKGLVRHGHRGYGRDIGLIVHMSAGTSISPDPNKKVIVTTVEDALRMGADAVSLHVNVGAETDFEMYRDLGLISETCEYWGMPLIAMMYPRGPKIKDERDPEVVAHAARLGAELGADIIKTNYTGDIDSFKDVVKGCPAPIVIAGGPKTNTDEEFLQMVKDAMHAGSAGVASGRNVFQHKDVRGITSAICKIVHEDVEVKEALNEIKI.

The active-site Proton acceptor is Asp-33. 1-deoxy-D-threo-hexo-2,5-diulose 6-phosphate contacts are provided by residues 33 to 37 (DHGVS) and 153 to 155 (YPR). The active-site Proton donor is the Tyr-153. Lys-184 (schiff-base intermediate with substrate) is an active-site residue. 1-deoxy-D-threo-hexo-2,5-diulose 6-phosphate contacts are provided by residues 209–210 (GG) and 237–238 (GR).

The protein belongs to the DeoC/FbaB aldolase family. ADHS subfamily. In terms of assembly, homodecamer.

It catalyses the reaction 1-deoxy-D-threo-hexo-2,5-diulose 6-phosphate + L-aspartate 4-semialdehyde = 2,3-dioxopropyl phosphate + 2-amino-2,3,7-trideoxy-D-lyxo-hept-6-ulosonate. Catalyzes a transaldol reaction between 6-deoxy-5-ketofructose 1-phosphate (DKFP) and L-aspartate semialdehyde (ASA) with an elimination of hydroxypyruvaldehyde phosphate to yield 2-amino-3,7-dideoxy-D-threo-hept-6-ulosonate (ADH). Plays a key role in an alternative pathway of the biosynthesis of 3-dehydroquinate (DHQ), which is involved in the canonical pathway for the biosynthesis of aromatic amino acids. This Methanococcus vannielii (strain ATCC 35089 / DSM 1224 / JCM 13029 / OCM 148 / SB) protein is 2-amino-3,7-dideoxy-D-threo-hept-6-ulosonate synthase.